The sequence spans 406 residues: Argininosuccinate synthase (406 aa).

ATP is bound by residues 11–19 and Ala38; that span reads AYSGGLDTS. Residues Tyr91 and Ser96 each coordinate L-citrulline. Gly121 contributes to the ATP binding site. Residues Thr123, Asn127, and Asp128 each coordinate L-aspartate. Residue Asn127 coordinates L-citrulline. L-citrulline contacts are provided by Arg131, Ser181, Ser190, Glu266, and Tyr278.

This sequence belongs to the argininosuccinate synthase family. Type 1 subfamily. Homotetramer.

It localises to the cytoplasm. The catalysed reaction is L-citrulline + L-aspartate + ATP = 2-(N(omega)-L-arginino)succinate + AMP + diphosphate + H(+). Its pathway is amino-acid biosynthesis; L-arginine biosynthesis; L-arginine from L-ornithine and carbamoyl phosphate: step 2/3. The protein is Argininosuccinate synthase of Campylobacter lari (strain RM2100 / D67 / ATCC BAA-1060).